Here is a 178-residue protein sequence, read N- to C-terminus: Cytidylate kinase (178 aa).

Position 7–15 (7–15 (GLPGTGTTT)) interacts with ATP.

Belongs to the cytidylate kinase family. Type 2 subfamily.

It is found in the cytoplasm. It carries out the reaction CMP + ATP = CDP + ADP. The catalysed reaction is dCMP + ATP = dCDP + ADP. In Methanococcus maripaludis (strain DSM 14266 / JCM 13030 / NBRC 101832 / S2 / LL), this protein is Cytidylate kinase.